We begin with the raw amino-acid sequence, 120 residues long: Large ribosomal subunit protein bL17 (120 aa).

It belongs to the bacterial ribosomal protein bL17 family. As to quaternary structure, part of the 50S ribosomal subunit. Contacts protein L32.

This chain is Large ribosomal subunit protein bL17, found in Bacillus cereus (strain ATCC 14579 / DSM 31 / CCUG 7414 / JCM 2152 / NBRC 15305 / NCIMB 9373 / NCTC 2599 / NRRL B-3711).